Consider the following 331-residue polypeptide: Lipoyl synthase (331 aa).

Residues 1–33 (MSDALIASSSEAPQSPAEQYDPTRKQKSADKTA) are disordered. A compositionally biased stretch (low complexity) spans 7-19 (ASSSEAPQSPAEQ). Over residues 21-33 (DPTRKQKSADKTA) the composition is skewed to basic and acidic residues. [4Fe-4S] cluster is bound by residues Cys78, Cys83, Cys89, Cys104, Cys108, Cys111, and Ser318. A Radical SAM core domain is found at 89–307 (CFGKGTATFM…EEEAYKMGFT (219 aa)).

This sequence belongs to the radical SAM superfamily. Lipoyl synthase family. The cofactor is [4Fe-4S] cluster.

It localises to the cytoplasm. It carries out the reaction [[Fe-S] cluster scaffold protein carrying a second [4Fe-4S](2+) cluster] + N(6)-octanoyl-L-lysyl-[protein] + 2 oxidized [2Fe-2S]-[ferredoxin] + 2 S-adenosyl-L-methionine + 4 H(+) = [[Fe-S] cluster scaffold protein] + N(6)-[(R)-dihydrolipoyl]-L-lysyl-[protein] + 4 Fe(3+) + 2 hydrogen sulfide + 2 5'-deoxyadenosine + 2 L-methionine + 2 reduced [2Fe-2S]-[ferredoxin]. It functions in the pathway protein modification; protein lipoylation via endogenous pathway; protein N(6)-(lipoyl)lysine from octanoyl-[acyl-carrier-protein]: step 2/2. In terms of biological role, catalyzes the radical-mediated insertion of two sulfur atoms into the C-6 and C-8 positions of the octanoyl moiety bound to the lipoyl domains of lipoate-dependent enzymes, thereby converting the octanoylated domains into lipoylated derivatives. The sequence is that of Lipoyl synthase from Cupriavidus pinatubonensis (strain JMP 134 / LMG 1197) (Cupriavidus necator (strain JMP 134)).